Reading from the N-terminus, the 181-residue chain is Probable cobalt-precorrin-6B C(15)-methyltransferase (decarboxylating) (181 aa).

S-adenosyl-L-methionine contacts are provided by residues Thr-16, 40–44, Asp-61, and Ala-89; that span reads GCGSG.

The protein belongs to the methyltransferase superfamily. Archaeal-type CbiT family.

The enzyme catalyses Co-precorrin-6B + S-adenosyl-L-methionine = Co-precorrin-7 + S-adenosyl-L-homocysteine + CO2. It participates in cofactor biosynthesis; adenosylcobalamin biosynthesis; cob(II)yrinate a,c-diamide from sirohydrochlorin (anaerobic route): step 8/10. Catalyzes the methylation of C-15 in cobalt-precorrin-6B followed by the decarboxylation of C-12 to form cobalt-precorrin-7. The polypeptide is Probable cobalt-precorrin-6B C(15)-methyltransferase (decarboxylating) (Methanococcus maripaludis (strain C7 / ATCC BAA-1331)).